A 732-amino-acid polypeptide reads, in one-letter code: MERGGGGSGTGSRPEGTARGTSLPGKIAEPGAVRTSQPNYRPQGMEGFLKSDERQRLAKERREEREKCLAAREQQILEKQKRARLQYEKQMEERWRKLEEQRQREDQKRAAVEEKRKQKLREEEERLEAMMRRSLERTQQLELKKKYSWGAPLAIGPGGHDACDKLSTSTMSLPKPTEPPMNKRLSSSTVAISYSPDRVFHVCPRLAPLGPLNPSYKSSPTRNIEKKKATSTSTSGAGDVGKEALSGGEASLVEKVKRGQRTATSLPVVNFGSPLRRCEFSGGIPKRPSSPVISKTATKAYPQSPKTTKPPYPGSPVKYRLPALSGQDMPKRKAEKEKSNKEREGTLAQQAAGPQGEEALEKHVVDKHASEKHAAAAGGKAENSAALGKPTAGTTDAGEAAKILAEKRRQARLQKEQEEQERLEKEEQDRLEREELKRKAEEERLRLEEEARKQEEERKRQEEEKKKQEGEEKRKAGEEAKRKAEEELLLKEKQEQEKQEKAMIEKQKEAAETKAREVAEQMRLEREQIMLQIEQERLERKKRIDEIMKRTRKSDVSPQVKKEDPKVGVQPAVCVEKKTKLVVPNKMEINGLNTCQEVNGVDHAAPETYPQDIFSNGLKPAGGLIHLDALDGKSNSLDDSTEEVQSMDVSPVSKEELISIPEFSPVSEMIPGVSLDQNGTGNARALQDLLDFTGPPTFPKRSSENLSLDDCNKNLIEGFNSPGQETPLNTFC.

An N-acetylmethionine modification is found at Met-1. Positions 1–10 (MERGGGGSGT) are enriched in gly residues. 5 disordered regions span residues 1-64 (MERG…RREE), 95-123 (WRKLEEQRQREDQKRAAVEEKRKQKLREE), 157-186 (PGGHDACDKLSTSTMSLPKPTEPPMNKRLS), 210-244 (GPLNPSYKSSPTRNIEKKKATSTSTSGAGDVGKEA), and 279-509 (EFSG…KQKE). Positions 49–64 (LKSDERQRLAKERREE) are enriched in basic and acidic residues. Residues 51-146 (SDERQRLAKE…RTQQLELKKK (96 aa)) adopt a coiled-coil conformation. A compositionally biased stretch (basic and acidic residues) spans 329 to 345 (MPKRKAEKEKSNKEREG). The span at 347 to 357 (LAQQAAGPQGE) shows a compositional bias: low complexity. Residues 359–374 (ALEKHVVDKHASEKHA) show a composition bias toward basic and acidic residues. Residues 375 to 386 (AAAGGKAENSAA) are compositionally biased toward low complexity. Basic and acidic residues predominate over residues 404–509 (LAEKRRQARL…EKAMIEKQKE (106 aa)).

This sequence belongs to the MAP7 family. Interacts (via N-terminus) with microtubules; facilitates microtubule stabilization. Interacts with kinesin-1 family members, KIF5A, KIF5B and KIF5C.

It localises to the cytoplasm. It is found in the cytoskeleton. The protein localises to the microtubule organizing center. Its subcellular location is the centrosome. The protein resides in the midbody. It localises to the cell projection. It is found in the neuron projection. The protein localises to the axon. Microtubule-stabilizing protein that plays a role in the control of cell motility and neurite outgrowth via direct binding to the microtubule. Acts as a critical cofactor for kinesin transport. In the proximal axon, regulates kinesin-1 family members, KIF5A, KIF5B and KIF5C recruitment to microtubules and contributes to kinesin-1-mediated transport in the axons. This Homo sapiens (Human) protein is MAP7 domain-containing protein 2 (MAP7D2).